The sequence spans 469 residues: Ribosomal protein uS12 methylthiotransferase RimO (469 aa).

The MTTase N-terminal domain occupies 1–115; the sequence is MKFHIITLGC…IGSVVAGGVA (115 aa). The [4Fe-4S] cluster site is built by Cys-10, Cys-46, Cys-78, Cys-180, Cys-184, and Cys-187. In terms of domain architecture, Radical SAM core spans 166-398; it reads NKRGPSAYLK…MAVQQVISRA (233 aa). Residues 401–469 form the TRAM domain; that stretch reads ARFVGQTMKV…TDYDLWGEIV (69 aa).

This sequence belongs to the methylthiotransferase family. RimO subfamily. Requires [4Fe-4S] cluster as cofactor.

The protein resides in the cytoplasm. The enzyme catalyses L-aspartate(89)-[ribosomal protein uS12]-hydrogen + (sulfur carrier)-SH + AH2 + 2 S-adenosyl-L-methionine = 3-methylsulfanyl-L-aspartate(89)-[ribosomal protein uS12]-hydrogen + (sulfur carrier)-H + 5'-deoxyadenosine + L-methionine + A + S-adenosyl-L-homocysteine + 2 H(+). In terms of biological role, catalyzes the methylthiolation of an aspartic acid residue of ribosomal protein uS12. This Herpetosiphon aurantiacus (strain ATCC 23779 / DSM 785 / 114-95) protein is Ribosomal protein uS12 methylthiotransferase RimO.